Reading from the N-terminus, the 338-residue chain is Anthranilate phosphoribosyltransferase (338 aa).

5-phospho-alpha-D-ribose 1-diphosphate contacts are provided by residues glycine 81, 84–85 (GD), threonine 89, 91–94 (NIST), 109–117 (KHGNRALSS), and alanine 121. Glycine 81 is a binding site for anthranilate. Serine 93 serves as a coordination point for Mg(2+). Residue asparagine 112 participates in anthranilate binding. Position 167 (arginine 167) interacts with anthranilate. Residues aspartate 225 and glutamate 226 each contribute to the Mg(2+) site.

This sequence belongs to the anthranilate phosphoribosyltransferase family. In terms of assembly, homodimer. The cofactor is Mg(2+).

It carries out the reaction N-(5-phospho-beta-D-ribosyl)anthranilate + diphosphate = 5-phospho-alpha-D-ribose 1-diphosphate + anthranilate. The protein operates within amino-acid biosynthesis; L-tryptophan biosynthesis; L-tryptophan from chorismate: step 2/5. Its function is as follows. Catalyzes the transfer of the phosphoribosyl group of 5-phosphorylribose-1-pyrophosphate (PRPP) to anthranilate to yield N-(5'-phosphoribosyl)-anthranilate (PRA). In Rhizobium johnstonii (strain DSM 114642 / LMG 32736 / 3841) (Rhizobium leguminosarum bv. viciae), this protein is Anthranilate phosphoribosyltransferase.